The sequence spans 442 residues: Choline monooxygenase, chloroplastic (442 aa).

Residues 1 to 58 constitute a chloroplast transit peptide; sequence MASSASMLINYPTTFCGVRNSSNPNNDQFSDQINIPSSLNNNINISKITSKTNKIIPK. A Rieske domain is found at 123 to 229; it reads WQVAGYSDQI…VAIWGPFVLI (107 aa). Residues Cys-165, His-167, Cys-184, and His-187 each coordinate [2Fe-2S] cluster. Fe cation is bound by residues His-290 and His-295.

Belongs to the choline monooxygenase family. Requires [2Fe-2S] cluster as cofactor. It depends on Fe cation as a cofactor. Mg(2+) serves as cofactor.

The protein localises to the plastid. It localises to the chloroplast stroma. It catalyses the reaction choline + 2 reduced [2Fe-2S]-[ferredoxin] + O2 + 2 H(+) = betaine aldehyde hydrate + 2 oxidized [2Fe-2S]-[ferredoxin] + H2O. It functions in the pathway amine and polyamine biosynthesis; betaine biosynthesis via choline pathway; betaine aldehyde from choline (monooxygenase route): step 1/1. In terms of biological role, catalyzes the first step of the osmoprotectant glycine betaine synthesis. The protein is Choline monooxygenase, chloroplastic (CMO) of Amaranthus tricolor (Joseph's coat).